The following is a 432-amino-acid chain: Trigger factor (432 aa).

Positions E161–P246 constitute a PPIase FKBP-type domain.

It belongs to the FKBP-type PPIase family. Tig subfamily.

The protein resides in the cytoplasm. It carries out the reaction [protein]-peptidylproline (omega=180) = [protein]-peptidylproline (omega=0). Functionally, involved in protein export. Acts as a chaperone by maintaining the newly synthesized protein in an open conformation. Functions as a peptidyl-prolyl cis-trans isomerase. The chain is Trigger factor from Salmonella arizonae (strain ATCC BAA-731 / CDC346-86 / RSK2980).